A 321-amino-acid chain; its full sequence is Necdin (321 aa).

The interval 1-96 (MSEQSKDLSD…QPGPAPPAPA (96 aa)) is disordered. Residues 20–35 (SEVHSSPGVSEGVPPS) are compositionally biased toward low complexity. Residues 98–297 (LVQKAHELMW…QAWPSRYREA (200 aa)) form the MAGE domain.

In terms of assembly, binds to the transactivation domains of E2F1 and p53. Binds also SV40 large T antigen and adenovirus E1A. Interacts with nucleobindin 1 and 2. As to expression, almost ubiquitous. Detected in fetal brain, lung, liver and kidney; in adult heart, brain, placenta, lung, liver, skeletal muscle, kidney, pancreas, spleen, thymus, prostate, testis, ovary, small intestine and colon. Not detected in peripheral blood leukocytes. In brain, restricted to post-mitotic neurons.

It is found in the perikaryon. The protein resides in the nucleus. In terms of biological role, growth suppressor that facilitates the entry of the cell into cell cycle arrest. Functionally similar to the retinoblastoma protein it binds to and represses the activity of cell-cycle-promoting proteins such as SV40 large T antigen, adenovirus E1A, and the transcription factor E2F. Necdin also interacts with p53 and works in an additive manner to inhibit cell growth. Also functions as a transcription factor and directly binds to specific guanosine-rich DNA sequences. The sequence is that of Necdin (NDN) from Homo sapiens (Human).